A 155-amino-acid polypeptide reads, in one-letter code: Small ribosomal subunit protein uS7 (155 aa).

This sequence belongs to the universal ribosomal protein uS7 family. In terms of assembly, part of the 30S ribosomal subunit. Contacts proteins S9 and S11.

Its function is as follows. One of the primary rRNA binding proteins, it binds directly to 16S rRNA where it nucleates assembly of the head domain of the 30S subunit. Is located at the subunit interface close to the decoding center, probably blocks exit of the E-site tRNA. This chain is Small ribosomal subunit protein uS7, found in Thermotoga neapolitana (strain ATCC 49049 / DSM 4359 / NBRC 107923 / NS-E).